The chain runs to 339 residues: Nitrilase (339 aa).

One can recognise a CN hydrolase domain in the interval 7 to 277 (YRVAAVQASP…EGITYADIDL (271 aa)). Glutamate 47 serves as the catalytic Proton acceptor. Catalysis depends on lysine 128, which acts as the Proton donor. The Nucleophile role is filled by cysteine 162.

Belongs to the carbon-nitrogen hydrolase superfamily. Nitrilase family.

It catalyses the reaction a nitrile + 2 H2O = a carboxylate + NH4(+). In Bacillus sp. (strain OxB-1), this protein is Nitrilase (nit).